We begin with the raw amino-acid sequence, 459 residues long: Protein U54 (459 aa).

An N-terminal signal peptide occupies residues 1-20; sequence MQPATLQWSSYVLQLRLTTA. N-linked (GlcNAc...) asparagine; by host glycosylation is found at N76, N100, N281, N321, and N452.

It belongs to the herpesviridae UL82 family.

In Homo sapiens (Human), this protein is Protein U54 (U54).